Here is a 156-residue protein sequence, read N- to C-terminus: Small ribosomal subunit protein uS7 (156 aa).

Belongs to the universal ribosomal protein uS7 family. Part of the 30S ribosomal subunit. Contacts proteins S9 and S11.

In terms of biological role, one of the primary rRNA binding proteins, it binds directly to 16S rRNA where it nucleates assembly of the head domain of the 30S subunit. Is located at the subunit interface close to the decoding center, probably blocks exit of the E-site tRNA. This chain is Small ribosomal subunit protein uS7, found in Mesorhizobium japonicum (strain LMG 29417 / CECT 9101 / MAFF 303099) (Mesorhizobium loti (strain MAFF 303099)).